The chain runs to 496 residues: Cobyric acid synthase (496 aa).

Residues 256 to 444 form the GATase cobBQ-type domain; that stretch reads KINIAVVLLR…IHGILDNQAF (189 aa). The active-site Nucleophile is the Cys337. His436 is a catalytic residue.

The protein belongs to the CobB/CobQ family. CobQ subfamily.

It participates in cofactor biosynthesis; adenosylcobalamin biosynthesis. In terms of biological role, catalyzes amidations at positions B, D, E, and G on adenosylcobyrinic A,C-diamide. NH(2) groups are provided by glutamine, and one molecule of ATP is hydrogenolyzed for each amidation. The sequence is that of Cobyric acid synthase from Phocaeicola vulgatus (strain ATCC 8482 / DSM 1447 / JCM 5826 / CCUG 4940 / NBRC 14291 / NCTC 11154) (Bacteroides vulgatus).